The following is a 396-amino-acid chain: Phosphoglycerate kinase (396 aa).

Substrate is bound by residues 21–23, arginine 36, 59–62, arginine 119, and arginine 156; these read DFN and HLGK. ATP contacts are provided by residues lysine 206, glycine 294, glutamate 325, and 352–355; that span reads GGDS.

It belongs to the phosphoglycerate kinase family. Monomer.

It is found in the cytoplasm. The enzyme catalyses (2R)-3-phosphoglycerate + ATP = (2R)-3-phospho-glyceroyl phosphate + ADP. Its pathway is carbohydrate degradation; glycolysis; pyruvate from D-glyceraldehyde 3-phosphate: step 2/5. The polypeptide is Phosphoglycerate kinase (Listeria monocytogenes serovar 1/2a (strain ATCC BAA-679 / EGD-e)).